The primary structure comprises 125 residues: Large ribosomal subunit protein bL12 (125 aa).

This sequence belongs to the bacterial ribosomal protein bL12 family. Homodimer. Part of the ribosomal stalk of the 50S ribosomal subunit. Forms a multimeric L10(L12)X complex, where L10 forms an elongated spine to which 2 to 4 L12 dimers bind in a sequential fashion. Binds GTP-bound translation factors.

Functionally, forms part of the ribosomal stalk which helps the ribosome interact with GTP-bound translation factors. Is thus essential for accurate translation. The polypeptide is Large ribosomal subunit protein bL12 (Rhizobium johnstonii (strain DSM 114642 / LMG 32736 / 3841) (Rhizobium leguminosarum bv. viciae)).